We begin with the raw amino-acid sequence, 494 residues long: Aspartyl/glutamyl-tRNA(Asn/Gln) amidotransferase subunit B (494 aa).

This sequence belongs to the GatB/GatE family. GatB subfamily. As to quaternary structure, heterotrimer of A, B and C subunits.

The catalysed reaction is L-glutamyl-tRNA(Gln) + L-glutamine + ATP + H2O = L-glutaminyl-tRNA(Gln) + L-glutamate + ADP + phosphate + H(+). It carries out the reaction L-aspartyl-tRNA(Asn) + L-glutamine + ATP + H2O = L-asparaginyl-tRNA(Asn) + L-glutamate + ADP + phosphate + 2 H(+). Functionally, allows the formation of correctly charged Asn-tRNA(Asn) or Gln-tRNA(Gln) through the transamidation of misacylated Asp-tRNA(Asn) or Glu-tRNA(Gln) in organisms which lack either or both of asparaginyl-tRNA or glutaminyl-tRNA synthetases. The reaction takes place in the presence of glutamine and ATP through an activated phospho-Asp-tRNA(Asn) or phospho-Glu-tRNA(Gln). This Protochlamydia amoebophila (strain UWE25) protein is Aspartyl/glutamyl-tRNA(Asn/Gln) amidotransferase subunit B.